Consider the following 1229-residue polypeptide: Nuclear envelope pore membrane protein POM 121C (1229 aa).

The span at 1 to 10 (MSPAAAAAGA) shows a compositional bias: low complexity. Residues 1–24 (MSPAAAAAGAGERRRPIASVRDGR) are disordered. Residues 1 to 40 (MSPAAAAAGAGERRRPIASVRDGRGRGCGGPAGAALLGLS) form a cisternal side region. The interval 1–398 (MSPAAAAAGA…AITSSYSSTR (398 aa)) is required for targeting to the nucleus and nuclear pore complex. The span at 11–24 (GERRRPIASVRDGR) shows a compositional bias: basic and acidic residues. A helical membrane pass occupies residues 41 to 61 (LVGLLLYLVPAAAALAWLAVG). Positions 62–1229 (TTAAWWGLSR…QARRQHTRKK (1168 aa)) are pore side. Position 81 is a phosphoserine (Ser-81). 5 disordered regions span residues 90–200 (RTLF…LPDR), 296–507 (KKKK…LGYS), 579–747 (KKMQ…TAPT), 936–966 (PLPS…ALTP), and 1202–1229 (PSFS…TRKK). A compositionally biased stretch (pro residues) spans 155-166 (ARPAPRSTPPSQ). Positions 176–189 (PSLPTPLLRPSGRP) are enriched in low complexity. Residues Ser-322, Ser-328, Ser-348, Ser-370, and Ser-373 each carry the phosphoserine modification. Polar residues predominate over residues 374–400 (LTGAYTSGIPSSSRNAITSSYSSTRGI). Low complexity predominate over residues 409-422 (PSSSPFSSPASSRS). Composition is skewed to basic and acidic residues over residues 427–439 (RPAK…ELCH) and 449–463 (ADKE…DTTP). The span at 468 to 479 (NSNSQSTPGSSG) shows a compositional bias: polar residues. Over residues 612 to 629 (PPLGLSQSGPPGLLPSPS) the composition is skewed to low complexity. Residues 660–673 (QAETATKPQATSAP) are compositionally biased toward polar residues. Low complexity-rich tracts occupy residues 689–703 (SPSS…SASP) and 726–747 (SVSA…TAPT). Basic residues predominate over residues 1219-1229 (LQARRQHTRKK).

It belongs to the POM121 family.

It localises to the nucleus. The protein localises to the nuclear pore complex. Its subcellular location is the nucleus membrane. The protein resides in the endoplasmic reticulum membrane. In terms of biological role, essential component of the nuclear pore complex (NPC). The repeat-containing domain may be involved in anchoring components of the pore complex to the pore membrane. When overexpressed in cells induces the formation of cytoplasmic annulate lamellae (AL). The sequence is that of Nuclear envelope pore membrane protein POM 121C (POM121C) from Homo sapiens (Human).